The sequence spans 521 residues: Solute carrier family 35 member F4 (521 aa).

A run of 10 helical transmembrane segments spans residues Met160–Gly180, Phe192–Val212, Phe248–Tyr266, Asp277–Leu297, Phe301–Tyr321, Ile330–Phe350, Phe365–Tyr385, Phe395–Val417, Val419–Ala441, and Val450–Met470. The EamA domain maps to Leu261–Tyr321.

Belongs to the SLC35F solute transporter family.

Its subcellular location is the membrane. Functionally, putative solute transporter. This Homo sapiens (Human) protein is Solute carrier family 35 member F4 (SLC35F4).